We begin with the raw amino-acid sequence, 343 residues long: Zinc finger CCCH domain-containing protein 39 (343 aa).

Residues 114 to 147 (LSHLADAADEAAALRQENAELRVANNDLACRIAK) adopt a coiled-coil conformation. 2 consecutive C3H1-type zinc fingers follow at residues 268-296 (MFKT…HGVA) and 306-334 (RYKT…HSIT).

The polypeptide is Zinc finger CCCH domain-containing protein 39 (Oryza sativa subsp. japonica (Rice)).